We begin with the raw amino-acid sequence, 343 residues long: ABC transporter riboflavin-binding protein RfuA (343 aa).

An N-terminal signal peptide occupies residues 1–19 (MNGAVCVLSALIAVFTCFS). Cysteine 20 carries N-palmitoyl cysteine lipidation. The S-diacylglycerol cysteine moiety is linked to residue cysteine 20. Riboflavin-binding positions include 43–46 (SPVY), aspartate 124, glutamine 140, tyrosine 176, tryptophan 208, and aspartate 255.

The protein belongs to the BMP lipoprotein family. In terms of assembly, monomer in solution. The complex is probably composed of two ATP-binding proteins (RfuB), two transmembrane proteins (RfuC and RfuD) and a solute-binding protein (RfuA).

It is found in the cell inner membrane. In terms of biological role, probably part of the ABC transporter complex RfuABCD involved in riboflavin import. Binds riboflavin. This is ABC transporter riboflavin-binding protein RfuA from Treponema pallidum (strain Nichols).